A 360-amino-acid polypeptide reads, in one-letter code: Protein Wnt-2 (360 aa).

Residues 1–25 form the signal peptide; that stretch reads MNAPLAGIWPWLPLLLTWLAPEVSS. 11 disulfides stabilise this stretch: cysteine 76–cysteine 87, cysteine 127–cysteine 135, cysteine 137–cysteine 157, cysteine 206–cysteine 220, cysteine 208–cysteine 215, cysteine 278–cysteine 309, cysteine 294–cysteine 304, cysteine 308–cysteine 348, cysteine 324–cysteine 339, cysteine 326–cysteine 336, and cysteine 331–cysteine 332. Serine 212 is lipidated: O-palmitoleoyl serine; by PORCN. N-linked (GlcNAc...) asparagine glycosylation is present at asparagine 295.

It belongs to the Wnt family. In terms of processing, palmitoleoylation is required for efficient binding to frizzled receptors. Depalmitoleoylation leads to Wnt signaling pathway inhibition.

It localises to the secreted. Its subcellular location is the extracellular space. The protein resides in the extracellular matrix. Ligand for members of the frizzled family of seven transmembrane receptors. Functions in the canonical Wnt signaling pathway that results in activation of transcription factors of the TCF/LEF family. Functions as a upstream regulator of FGF10 expression. Plays an important role in embryonic lung development. May contribute to embryonic brain development by regulating the proliferation of dopaminergic precursors and neurons. The sequence is that of Protein Wnt-2 (WNT2) from Loxodonta africana (African elephant).